The sequence spans 101 residues: Translation initiation factor IF-1, chloroplastic (101 aa).

Residues 1-10 (MNQLKKSFSP) are compositionally biased toward polar residues. The disordered stretch occupies residues 1–35 (MNQLKKSFSPTEGKKDQNNLINDPQKNKQKKQKKL). The S1-like domain maps to 26 to 101 (KNKQKKQKKL…TKGRITYRHR (76 aa)).

Belongs to the IF-1 family. As to quaternary structure, component of the 30S ribosomal translation pre-initiation complex which assembles on the 30S ribosome in the order IF-2 and IF-3, IF-1 and N-formylmethionyl-tRNA(fMet); mRNA recruitment can occur at any time during PIC assembly.

It is found in the plastid. The protein resides in the chloroplast. Functionally, one of the essential components for the initiation of protein synthesis. Stabilizes the binding of IF-2 and IF-3 on the 30S subunit to which N-formylmethionyl-tRNA(fMet) subsequently binds. Helps modulate mRNA selection, yielding the 30S pre-initiation complex (PIC). Upon addition of the 50S ribosomal subunit IF-1, IF-2 and IF-3 are released leaving the mature 70S translation initiation complex. This is Translation initiation factor IF-1, chloroplastic from Tetradesmus obliquus (Green alga).